A 196-amino-acid chain; its full sequence is Peroxiredoxin TSA1 (196 aa).

The region spanning 3-161 (AQVQKQAPTF…ALRLVEAFQW (159 aa)) is the Thioredoxin domain. K14 is covalently cross-linked (Glycyl lysine isopeptide (Lys-Gly) (interchain with G-Cter in ubiquitin)). 45–47 (TFV) provides a ligand contact to substrate. Catalysis depends on C48, which acts as the Cysteine sulfenic acid (-SOH) intermediate. K89 is covalently cross-linked (Glycyl lysine isopeptide (Lys-Gly) (interchain with G-Cter in ubiquitin)). Position 124 (R124) interacts with substrate. K132 is covalently cross-linked (Glycyl lysine isopeptide (Lys-Gly) (interchain with G-Cter in ubiquitin)). Residue T174 is modified to Phosphothreonine.

The protein belongs to the peroxiredoxin family. AhpC/Prx1 subfamily. In terms of assembly, homodimer; disulfide-linked, upon oxidation. Interacts with YAP1 via transient disulfide linkages. In terms of processing, the enzyme can be inactivated by further oxidation of the cysteine sulfenic acid (C(P)-SOH) to sulphinic acid (C(P)-SO2H) instead of its condensation to a disulfide bond. It can be reactivated by forming a transient disulfide bond with sulfiredoxin SRX1, which reduces the cysteine sulfinic acid in an ATP- and Mg-dependent manner.

It localises to the cytoplasm. It carries out the reaction a hydroperoxide + [thioredoxin]-dithiol = an alcohol + [thioredoxin]-disulfide + H2O. Its function is as follows. Thiol-specific peroxidase that catalyzes the reduction of hydrogen peroxide and organic hydroperoxides to water and alcohols, respectively. Plays a role in cell protection against oxidative stress by detoxifying peroxides and as sensor of hydrogen peroxide-mediated signaling events. Protects the cell against the oxidative stress caused by nascent-protein misfolding and aggregation. Relays hydrogen peroxide as a signal to the transcription factor YAP1 by inducing the formation of intramolecular disulfide bonds in YAP1, which causes its nuclear accumulation and activation. Can act alternatively as peroxidase and molecular chaperone. Oxidative stress and heat shock exposure cause a reversible shift of the protein structure from low MW species to high MW complexes, triggering a peroxidase-to-chaperone functional switch. The chaperone function of the protein enhances resistance to heat shock. The chain is Peroxiredoxin TSA1 from Saccharomyces cerevisiae (strain ATCC 204508 / S288c) (Baker's yeast).